Here is a 269-residue protein sequence, read N- to C-terminus: Hydroxyacylglutathione hydrolase (269 aa).

Zn(2+)-binding residues include His-56, His-58, Asp-60, His-61, His-115, Asp-137, and His-177.

Belongs to the metallo-beta-lactamase superfamily. Glyoxalase II family. Monomer. Zn(2+) is required as a cofactor.

The enzyme catalyses an S-(2-hydroxyacyl)glutathione + H2O = a 2-hydroxy carboxylate + glutathione + H(+). The protein operates within secondary metabolite metabolism; methylglyoxal degradation; (R)-lactate from methylglyoxal: step 2/2. Its function is as follows. Thiolesterase that catalyzes the hydrolysis of S-D-lactoyl-glutathione to form glutathione and D-lactic acid. This chain is Hydroxyacylglutathione hydrolase, found in Leptospira borgpetersenii serovar Hardjo-bovis (strain JB197).